A 346-amino-acid polypeptide reads, in one-letter code: Probable choline kinase 1 (346 aa).

ATP-binding residues include arginine 73, glutamine 210, and aspartate 227.

This sequence belongs to the choline/ethanolamine kinase family. In terms of tissue distribution, expressed in roots. Expressed at low levels in cauline leaves and flowers.

It catalyses the reaction choline + ATP = phosphocholine + ADP + H(+). Its pathway is phospholipid metabolism; phosphatidylcholine biosynthesis; phosphocholine from choline: step 1/1. In terms of biological role, involved in phospholipid biosynthesis. Catalyzes the first step in phosphatidylcholine biosynthesis. The polypeptide is Probable choline kinase 1 (CK1) (Arabidopsis thaliana (Mouse-ear cress)).